Consider the following 383-residue polypeptide: Insulinoma-associated protein 1a (383 aa).

Positions 1–20 (MPRGFLVKRNKKATPVSYRV) are SNAG domain. Disordered stretches follow at residues 99-141 (PVDL…AMRK) and 229-269 (RWHK…SEDG). Polar residues predominate over residues 105–120 (GTSNSNRTGTTVTTKR). A compositionally biased stretch (basic residues) spans 130-140 (KPASKKAKAMR). The C2H2-type 1 zinc-finger motif lies at 209-231 (YRCPECDKLFSCPANLASHRRWH). Over residues 244–256 (APEKEETSSDRDT) the composition is skewed to basic and acidic residues. The C2H2-type 2; degenerate zinc finger occupies 271 to 295 (YDCQHCGKKFKRQAYLKKHVTAHHD). C2H2-type zinc fingers lie at residues 314-337 (HLCPVCGENFPSRMSQERHIRLQH) and 342-365 (YPCKYCPAMFYSSPGLTRHINKCH).

Belongs to the INSM1 family.

It is found in the nucleus. Functionally, may act as a transcriptional regulator. May play a role in neurogenesis and neuroendocrine cell differentiation during embryonic development. The chain is Insulinoma-associated protein 1a (insm1a) from Danio rerio (Zebrafish).